The chain runs to 607 residues: Elongation factor 4 (607 aa).

A tr-type G domain is found at 11-193 (ENIRNFSIIA…KIVEVVPAPD (183 aa)). GTP-binding positions include 23-28 (DHGKST) and 140-143 (NKID).

It belongs to the TRAFAC class translation factor GTPase superfamily. Classic translation factor GTPase family. LepA subfamily.

The protein localises to the cell membrane. It carries out the reaction GTP + H2O = GDP + phosphate + H(+). Its function is as follows. Required for accurate and efficient protein synthesis under certain stress conditions. May act as a fidelity factor of the translation reaction, by catalyzing a one-codon backward translocation of tRNAs on improperly translocated ribosomes. Back-translocation proceeds from a post-translocation (POST) complex to a pre-translocation (PRE) complex, thus giving elongation factor G a second chance to translocate the tRNAs correctly. Binds to ribosomes in a GTP-dependent manner. This is Elongation factor 4 from Staphylococcus aureus (strain MW2).